Here is an 86-residue protein sequence, read N- to C-terminus: Exodeoxyribonuclease 7 small subunit (86 aa).

The disordered stretch occupies residues 1–26 (MQDELFETEKAPQKNTKNAKNAPKKS).

Belongs to the XseB family. As to quaternary structure, heterooligomer composed of large and small subunits.

Its subcellular location is the cytoplasm. It catalyses the reaction Exonucleolytic cleavage in either 5'- to 3'- or 3'- to 5'-direction to yield nucleoside 5'-phosphates.. In terms of biological role, bidirectionally degrades single-stranded DNA into large acid-insoluble oligonucleotides, which are then degraded further into small acid-soluble oligonucleotides. This chain is Exodeoxyribonuclease 7 small subunit, found in Helicobacter pylori (strain Shi470).